Consider the following 450-residue polypeptide: Ammonium transporter Rh type A (450 aa).

Residues 1–4 lie on the Cytoplasmic side of the membrane; it reads MRFK. A helical membrane pass occupies residues 5-25; that stretch reads FSLIALSLEVVMIVSFALFVE. Over 26 to 72 the chain is Extracellular; it reads YETSQNGSQKSASQQNASQQNAAAQQNASQQGNASSPAKEDQFFQLY. N-linked (GlcNAc...) asparagine glycosylation is found at N31, N41, N52, and N58. Positions 34–61 are disordered; that stretch reads QKSASQQNASQQNAAAQQNASQQGNASS. A helical membrane pass occupies residues 73 to 93; that stretch reads PLFQHVHVMIFVGFGFLMTFL. Over 94 to 97 the chain is Cytoplasmic; the sequence is KKYG. The helical transmembrane segment at 98–118 threads the bilayer; the sequence is FSGVGFNLFLAALGLQWGTIV. Topologically, residues 119-134 are extracellular; the sequence is QGLLHSHGLKFPFRIK. Residues 135–155 traverse the membrane as a helical segment; it reads NMINADFSTATVLISFGAVLG. Residues 156 to 159 lie on the Cytoplasmic side of the membrane; the sequence is KTSP. The helical transmembrane segment at 160–180 threads the bilayer; that stretch reads IQMIIMTILEIAVFAGNEHLV. The Extracellular portion of the chain corresponds to 181-189; sequence TEIFKASDT. A helical transmembrane segment spans residues 190 to 210; the sequence is GASMTIHAFGAYFGLAVAGVL. Residues 211–229 are Cytoplasmic-facing; it reads YRSGLKHGHPNEESVYHSD. A helical transmembrane segment spans residues 230–250; the sequence is LFAMIGTLFLWMFWPSFNSAI. Over 251–260 the chain is Extracellular; that stretch reads AQPENNQYRA. Residues 261 to 281 form a helical membrane-spanning segment; the sequence is IVNTYMSLAACVITAYALSSL. Residues 282-289 lie on the Cytoplasmic side of the membrane; the sequence is VERRGRLD. A helical transmembrane segment spans residues 290–307; it reads MVHIQNATLAGGVAVGTC. Topologically, residues 308-311 are extracellular; sequence ADME. A helical membrane pass occupies residues 312–332; it reads IPLYFAMTIGSIAGIISVLGY. Residues 333 to 349 are Cytoplasmic-facing; that stretch reads KFLSPLLAHKLMIHDTC. Residues 350-370 traverse the membrane as a helical segment; it reads GVHNLHGLPGVFGGLASIVAI. Residues 371 to 384 lie on the Extracellular side of the membrane; it reads SWGKSTVSTMAMQA. The chain crosses the membrane as a helical span at residues 385–405; the sequence is TALGSSIGSAIVGGLVTGLIL. The Cytoplasmic segment spans residues 406–450; sequence KLPVWNQPPDEYCFDDSVSWKVPKYRELDNYFFQHVTHNHVEHEV.

It belongs to the ammonium transporter (TC 2.A.49) family. Rh subfamily. In terms of assembly, homodimer. Heterotrimer; a RHCE monomer interacts with a RHAG homodimer. Component of the ankyrin-1 complex in the erythrocyte, composed of ANK1, RHCE, RHAG, SLC4A1, EPB42, GYPA, GYPB and AQP1. Interacts with GYPB (via the N-terminal); this interaction bridges the (RHAG)2(RHCE) heterotrimer with the SLC4A1 Band 3 I dimer complexed with GYPA. Post-translationally, glycosylated.

It localises to the membrane. It carries out the reaction methylamine(out) = methylamine(in). It catalyses the reaction NH4(+)(in) = NH4(+)(out). The enzyme catalyses CO2(out) = CO2(in). Functionally, component of the ankyrin-1 complex, a multiprotein complex involved in the stability and shape of the erythrocyte membrane. Heterotrimer with RHCE (RHAG)2(RHCE), that transports ammonium and its related derivative methylammonium, in both neutral and ionic forms, across the erythrocyte membrane. The transport of NH4(+) is electrogenic and masks the NH3 transport. Also, may act as a CO2 channel. Moreover in erythrocyte, regulates RHD membrane expression and is associated with rhesus blood group antigen expression. This Rattus norvegicus (Rat) protein is Ammonium transporter Rh type A.